The following is a 248-amino-acid chain: Triosephosphate isomerase (248 aa).

Positions 12 and 14 each coordinate substrate. An N6-acetyllysine modification is found at Lys-14. Tyr-68 carries the post-translational modification 3'-nitrotyrosine. His-96 functions as the Electrophile in the catalytic mechanism. Ser-106 bears the Phosphoserine mark. Lys-142 is covalently cross-linked (Glycyl lysine isopeptide (Lys-Gly) (interchain with G-Cter in SUMO1)). N6-succinyllysine is present on Lys-149. At Lys-156 the chain carries N6-acetyllysine; alternate. An N6-succinyllysine; alternate modification is found at Lys-156. Catalysis depends on Glu-166, which acts as the Proton acceptor. At Thr-173 the chain carries Phosphothreonine. Lys-194 carries the post-translational modification N6-acetyllysine; alternate. The residue at position 194 (Lys-194) is an N6-succinyllysine; alternate. Residue Lys-194 is modified to N6-methyllysine; alternate. Tyr-209 bears the 3'-nitrotyrosine mark. A Phosphoserine modification is found at Ser-212. Thr-214 bears the Phosphothreonine mark. Ser-223 carries the phosphoserine modification. The residue at position 238 (Lys-238) is an N6-acetyllysine.

The protein belongs to the triosephosphate isomerase family. In terms of assembly, homodimer.

The protein localises to the cytoplasm. The enzyme catalyses dihydroxyacetone phosphate = methylglyoxal + phosphate. It carries out the reaction D-glyceraldehyde 3-phosphate = dihydroxyacetone phosphate. It participates in carbohydrate degradation; glycolysis; D-glyceraldehyde 3-phosphate from glycerone phosphate: step 1/1. The protein operates within carbohydrate biosynthesis; gluconeogenesis. Its function is as follows. Triosephosphate isomerase is an extremely efficient metabolic enzyme that catalyzes the interconversion between dihydroxyacetone phosphate (DHAP) and D-glyceraldehyde-3-phosphate (G3P) in glycolysis and gluconeogenesis. It is also responsible for the non-negligible production of methylglyoxal a reactive cytotoxic side-product that modifies and can alter proteins, DNA and lipids. This chain is Triosephosphate isomerase (TPI1), found in Sus scrofa (Pig).